The sequence spans 154 residues: Jupiter microtubule associated homolog 1 (154 aa).

Position 1 is an N-acetylmethionine (Met1). Residues 1-19 are compositionally biased toward polar residues; that stretch reads MTTTTTFKGVDPNSRNSSR. The interval 1–154 is disordered; sequence MTTTTTFKGV…PGGKSSLVLG (154 aa). Thr2 is subject to N-acetylthreonine; in Hematological and neurological expressed 1 protein, N-terminally processed. Phosphoserine occurs at positions 28 and 31. The span at 47–59 shows a compositional bias: polar residues; sequence MASNIFGTPEENQ. Phosphothreonine is present on Thr54. Positions 60–71 are enriched in low complexity; the sequence is ASWAKSAGAKSS. Phosphoserine occurs at positions 71, 80, 87, 88, and 92. The span at 80–91 shows a compositional bias: polar residues; that stretch reads SGLQRRNSSEAS. Over residues 96–108 the composition is skewed to basic and acidic residues; sequence LDLKGEGDIHENV. Pro residues predominate over residues 125–138; it reads PAAPVPSPVAPAPV. The residue at position 131 (Ser131) is a Phosphoserine. Residue Lys148 is modified to N6-acetyllysine.

It belongs to the JUPITER family. In terms of assembly, interacts with the complex composed, at least, of APC, CTNNB1 and GSK3B; the interaction takes place with the inactive form of GSK3B (phosphorylated at 'Ser-9'). In terms of tissue distribution, expressed in testis, skeletal muscle, thymus, prostate, colon, peripheral blood cells, brain and placenta.

It localises to the nucleus. The protein localises to the cytoplasm. Its function is as follows. Modulates negatively AKT-mediated GSK3B signaling. Induces CTNNB1 'Ser-33' phosphorylation and degradation through the suppression of the inhibitory 'Ser-9' phosphorylation of GSK3B, which represses the function of the APC:CTNNB1:GSK3B complex and the interaction with CDH1/E-cadherin in adherent junctions. Plays a role in the regulation of cell cycle and cell adhesion. Has an inhibitory role on AR-signaling pathway through the induction of receptor proteasomal degradation. The protein is Jupiter microtubule associated homolog 1 of Homo sapiens (Human).